The following is a 548-amino-acid chain: MKDNWMKYKDDSLVASFYDSQTTTFQEQGFETELAFGTAGIRGQFGLGPGRLNRYTIQRLALGIANYLKDKEDNPSIVIHYDIRHLSSEFAHIITQILTSKGIKVYLADVYKTTPQLSFAVRYLQTSAGIMITASHNPKDYNGIKVYGADGAQLDEDTSLEVAQYINNLGNPLELNIDLNQELIEKNTFDLQEAVYDSYINEITNLIGDIPQSDLKVVYTSLHGTGVPIIPDVLKHLNFQNVSLVELQCELDPNFSSVKSANPEEREAFDLAIQQAHDLEANLIIATDPDVDRMGFVERDTNGQTYYFGGSEIGALLIKYLLEYTNVPNHSVVIQSIVSGELGKRLAQQHEVTVKEVLIGFKHIAKAIRELDDTESFLFAYEESYGYLADDFVRDKDAIQIVPLIIKYTSILKNEGKTLHDALKEIHREVGQYRDKPMSKVFEGREGQQQINALMDKLRRNIPDVIAGLKVIAVEDYETLKRNYKEDNTEEAISLPQANVIRILFKEGFIALRPSGTEPKLKFYLSLNVDNFEQVSQDIYNYIFGDTE.

The active-site Phosphoserine intermediate is serine 135. Mg(2+) is bound by residues serine 135, aspartate 288, aspartate 290, and aspartate 292.

Belongs to the phosphohexose mutase family. Mg(2+) is required as a cofactor.

It carries out the reaction alpha-D-glucose 1-phosphate = alpha-D-glucose 6-phosphate. It functions in the pathway glycolipid metabolism; diglucosyl-diacylglycerol biosynthesis. Catalyzes the interconversion between glucose-6-phosphate and alpha-glucose-1-phosphate. This is the first step in the biosynthesis of diglucosyl-diacylglycerol (Glc2-DAG), i.e. a glycolipid found in the membrane, which is also used as a membrane anchor for lipoteichoic acid (LTA). In Staphylococcus haemolyticus (strain JCSC1435), this protein is Phosphoglucomutase (pgcA).